A 136-amino-acid chain; its full sequence is General odorant-binding protein 57e (136 aa).

The signal sequence occupies residues 1 to 20 (MLDQLTLCLLLNFLCANVLA). Cystine bridges form between C28–C61, C57–C109, and C98–C118.

It belongs to the PBP/GOBP family.

Present in the aqueous fluid surrounding olfactory sensory dendrites and are thought to aid in the capture and transport of hydrophobic odorants into and through this fluid. The sequence is that of General odorant-binding protein 57e from Drosophila melanogaster (Fruit fly).